A 128-amino-acid chain; its full sequence is Small ribosomal subunit protein bS6 (128 aa).

The protein belongs to the bacterial ribosomal protein bS6 family.

Functionally, binds together with bS18 to 16S ribosomal RNA. This chain is Small ribosomal subunit protein bS6, found in Acinetobacter baylyi (strain ATCC 33305 / BD413 / ADP1).